An 816-amino-acid chain; its full sequence is Neuroligin-4, Y-linked (816 aa).

An N-terminal signal peptide occupies residues 1–43 (MLRPQGLLWLPLLFTSVCVMLNSNVLLWITALAIKFTLIDSQA). Residues 44–676 (QYPVVNTNYG…TKRDYSTELS (633 aa)) are Extracellular-facing. Residue Asn-102 is glycosylated (N-linked (GlcNAc...) asparagine). 2 disulfide bridges follow: Cys-110–Cys-146 and Cys-306–Cys-317. The interaction with NRXN1 stretch occupies residues 359 to 364 (QGEFLN). A disulfide bridge connects residues Cys-476 and Cys-510. Asn-511 carries N-linked (GlcNAc...) asparagine glycosylation. The segment at 636-659 (TKRPAITPANNPKHSKDPHKTGPE) is disordered. The segment covering 649–658 (HSKDPHKTGP) has biased composition (basic and acidic residues). The helical transmembrane segment at 677–697 (VTIAVGASLLFLNILAFAALY) threads the bilayer. Topologically, residues 698–816 (YKKDKRRHET…LPHGHSTTRV (119 aa)) are cytoplasmic. The residue at position 712 (Ser-712) is a Phosphoserine.

Belongs to the type-B carboxylesterase/lipase family. In terms of assembly, homodimer. Interacts with NRXN1 in a calcium-dependent manner. Interaction with neurexins is mediated by heparan sulfate glycan modification on neurexin. Interacts through its C-terminus with DLG4/PSD-95 third PDZ domain. In terms of tissue distribution, expressed in fetal and adult brain, prostate and testis.

It is found in the cell membrane. The protein resides in the postsynaptic density membrane. Functionally, cell surface protein involved in cell-cell-interactions via its interactions with neurexin family members. This is Neuroligin-4, Y-linked (NLGN4Y) from Homo sapiens (Human).